The chain runs to 419 residues: Peptide chain release factor subunit 1 (419 aa).

This sequence belongs to the eukaryotic release factor 1 family. As to quaternary structure, heterodimer of two subunits, one of which binds GTP.

It is found in the cytoplasm. Directs the termination of nascent peptide synthesis (translation) in response to the termination codons UAA, UAG and UGA. The sequence is that of Peptide chain release factor subunit 1 from Methanococcus maripaludis (strain DSM 14266 / JCM 13030 / NBRC 101832 / S2 / LL).